The sequence spans 594 residues: UvrABC system protein C (594 aa).

In terms of domain architecture, GIY-YIG spans 14-91 (DQPGCYLMKD…IKKYDPKYNI (78 aa)). One can recognise a UVR domain in the interval 196 to 231 (KEVRSELEIKMYEASEKLEFERAKELRDQIAHIDAI).

It belongs to the UvrC family. Interacts with UvrB in an incision complex.

The protein localises to the cytoplasm. In terms of biological role, the UvrABC repair system catalyzes the recognition and processing of DNA lesions. UvrC both incises the 5' and 3' sides of the lesion. The N-terminal half is responsible for the 3' incision and the C-terminal half is responsible for the 5' incision. This is UvrABC system protein C from Bacillus cereus (strain G9842).